A 220-amino-acid chain; its full sequence is Deoxyribose-phosphate aldolase (220 aa).

Residue Asp-89 is the Proton donor/acceptor of the active site. Residue Lys-151 is the Schiff-base intermediate with acetaldehyde of the active site. Lys-180 functions as the Proton donor/acceptor in the catalytic mechanism.

Belongs to the DeoC/FbaB aldolase family. DeoC type 1 subfamily.

It is found in the cytoplasm. The enzyme catalyses 2-deoxy-D-ribose 5-phosphate = D-glyceraldehyde 3-phosphate + acetaldehyde. It functions in the pathway carbohydrate degradation; 2-deoxy-D-ribose 1-phosphate degradation; D-glyceraldehyde 3-phosphate and acetaldehyde from 2-deoxy-alpha-D-ribose 1-phosphate: step 2/2. Catalyzes a reversible aldol reaction between acetaldehyde and D-glyceraldehyde 3-phosphate to generate 2-deoxy-D-ribose 5-phosphate. The chain is Deoxyribose-phosphate aldolase from Mycoplasmopsis pulmonis (strain UAB CTIP) (Mycoplasma pulmonis).